A 108-amino-acid polypeptide reads, in one-letter code: MTSLGSQLHRATFLTALLLLLLLQVKGVKTLIVSASLDGDKSQKDKVSSEDQGEEEYEEHFEASSEGEQWQEIDMVQQEDTISQAITLQDHLLDLAFCFNLASIMFFL.

Residues 1 to 30 form the signal peptide; it reads MTSLGSQLHRATFLTALLLLLLLQVKGVKT. The segment covering 39–49 has biased composition (basic and acidic residues); it reads GDKSQKDKVSS. Positions 39-64 are disordered; that stretch reads GDKSQKDKVSSEDQGEEEYEEHFEAS.

In terms of tissue distribution, detected in testicular germ cells and spermatozoa (at protein level). Abundantly expressed in testis.

The protein resides in the secreted. Functionally, sperm protein required for fusion of sperm with the egg membrane during fertilization. The sequence is that of Sperm-egg fusion protein LLCFC1 from Mus musculus (Mouse).